The sequence spans 285 residues: MSSTWLAPAKINLFLHINNKREDGYHNLQTIFQMLDYYDELKFSITNGGVIKRINGNEDVEQSQDLIVKAAKVLQEYTGTTLGANLSIVKNIPIGGGLGGGSSDAATTLVALNQLWDTKLTQPQLMKLGLNLGADVPVFIFAKSAWAEGIGEILSPIKMPNYYYLVVFINKHTSTKEIFSHYALTMSKPQGKIAKFSELINTHNDCLQAAIALEAEIGVALKHLNTCANHISQVRMSGTGSCVFNEFLTEKDALAAAKKVPKKWMSFVTRAINTSPIHSWAVAKR.

The active site involves lysine 10. 93–103 is an ATP binding site; it reads PIGGGLGGGSS. Aspartate 135 is an active-site residue.

This sequence belongs to the GHMP kinase family. IspE subfamily.

It catalyses the reaction 4-CDP-2-C-methyl-D-erythritol + ATP = 4-CDP-2-C-methyl-D-erythritol 2-phosphate + ADP + H(+). It functions in the pathway isoprenoid biosynthesis; isopentenyl diphosphate biosynthesis via DXP pathway; isopentenyl diphosphate from 1-deoxy-D-xylulose 5-phosphate: step 3/6. In terms of biological role, catalyzes the phosphorylation of the position 2 hydroxy group of 4-diphosphocytidyl-2C-methyl-D-erythritol. This is 4-diphosphocytidyl-2-C-methyl-D-erythritol kinase from Ruthia magnifica subsp. Calyptogena magnifica.